Reading from the N-terminus, the 558-residue chain is MEVPKEQIATLIEHGLYDSAEMLGCFLVSSPTVSAETSPQLKAENLILLGDALFHQREHRRAIHTYKQALHHYTRIPKQSSGISRSSLSLSTRSSVNASSISAINENEVRFKIASSHFALNETKAAIAEMESVKTRSLEMNILMAKLHRNSGYNRGAIAFYKECLRQCPYVLEAVIGLAELGVSAKDIISSFTQTSNRSAKVSLDQIDPTRWLQRYVEAQCCVASHAYKGALELFAELLQRFPNNVHLLTETAKVEAIIGKNDEAIMRFEKVRSIDPYTLTSMDEYAMLLQIKCDYSRLNKLVHDLLSVDHTRAEVFVALSVLWERKDARTALSYAEKSIRVDERHIPGYIMKGNLLLQAKRPEAAAIAFRAAQNLRSDLRSYQGLVHSYLAFGKTKEALYTAREAMNAMPQSAKALKLVGDVHAFTSSGREKAKKFYESGLRLEPGYLGAVLALAELHLMEGRNGDAVSLLERYLKDYADDSLHVKLAQVFAATNMLQDSLSHFQAALRINPQNEAAKKGLDRLEKQMKGIDPDATDENDENDVEDVDGDTEEAELM.

TPR repeat units lie at residues 43–76 (AENL…YTRI), 138–171 (LEMN…CPYV), 212–245 (WLQR…FPNN), 246–279 (VHLL…DPYT), 314–346 (AEVF…DERH), 348–380 (PGYI…RSDL), 381–413 (RSYQ…MPQS), 414–448 (AKAL…EPGY), 450–482 (GAVL…YADD), and 483–515 (SLHV…NPQN). Basic and acidic residues predominate over residues 519 to 533 (KKGLDRLEKQMKGID). The interval 519 to 558 (KKGLDRLEKQMKGIDPDATDENDENDVEDVDGDTEEAELM) is disordered. Residues 535–558 (DATDENDENDVEDVDGDTEEAELM) are compositionally biased toward acidic residues.

It belongs to the APC7 family. As to quaternary structure, the APC/C is composed of at least 10 subunits.

Its subcellular location is the nucleus. It functions in the pathway protein modification; protein ubiquitination. Functionally, component of the anaphase promoting complex/cyclosome (APC/C), a cell cycle-regulated E3 ubiquitin-protein ligase complex that controls progression through mitosis and the G1 phase of the cell cycle. The APC/C complex controls several key steps in the cell cycle by mediating ubiquitination and subsequent degradation of target proteins such as cyclins. The APC/C complex is required for the female gametophyte development and is involved in several aspect of development by controlling cell division and cell elongation. Involved in the control of endoreduplication. This chain is Anaphase-promoting complex subunit 7 (APC7), found in Arabidopsis thaliana (Mouse-ear cress).